We begin with the raw amino-acid sequence, 154 residues long: UPF0178 protein Sala_2376 (154 aa).

Belongs to the UPF0178 family.

The protein is UPF0178 protein Sala_2376 of Sphingopyxis alaskensis (strain DSM 13593 / LMG 18877 / RB2256) (Sphingomonas alaskensis).